Reading from the N-terminus, the 381-residue chain is Glucose-1-phosphate adenylyltransferase (381 aa).

Alpha-D-glucose 1-phosphate contacts are provided by residues Y100, G165, 180 to 181 (EK), and S191.

This sequence belongs to the bacterial/plant glucose-1-phosphate adenylyltransferase family. In terms of assembly, homotetramer.

It carries out the reaction alpha-D-glucose 1-phosphate + ATP + H(+) = ADP-alpha-D-glucose + diphosphate. The protein operates within glycan biosynthesis; glycogen biosynthesis. Functionally, involved in the biosynthesis of ADP-glucose, a building block required for the elongation reactions to produce glycogen. Catalyzes the reaction between ATP and alpha-D-glucose 1-phosphate (G1P) to produce pyrophosphate and ADP-Glc. This chain is Glucose-1-phosphate adenylyltransferase, found in Mycoplasma mobile (strain ATCC 43663 / 163K / NCTC 11711) (Mesomycoplasma mobile).